We begin with the raw amino-acid sequence, 207 residues long: Uracil phosphoribosyltransferase (207 aa).

5-phospho-alpha-D-ribose 1-diphosphate is bound by residues Arg77, Arg102, and 129–137 (DPMLATGGS). Residues Ile192 and 197-199 (GDA) contribute to the uracil site. Asp198 provides a ligand contact to 5-phospho-alpha-D-ribose 1-diphosphate.

It belongs to the UPRTase family. The cofactor is Mg(2+).

It carries out the reaction UMP + diphosphate = 5-phospho-alpha-D-ribose 1-diphosphate + uracil. The protein operates within pyrimidine metabolism; UMP biosynthesis via salvage pathway; UMP from uracil: step 1/1. Allosterically activated by GTP. Catalyzes the conversion of uracil and 5-phospho-alpha-D-ribose 1-diphosphate (PRPP) to UMP and diphosphate. The polypeptide is Uracil phosphoribosyltransferase (Dictyoglomus turgidum (strain DSM 6724 / Z-1310)).